Consider the following 529-residue polypeptide: Peptide chain release factor 3 (529 aa).

The 270-residue stretch at 11-280 folds into the tr-type G domain; it reads AKRRTFAIIS…GLVAWAPAPM (270 aa). GTP contacts are provided by residues 20-27, 88-92, and 142-145; these read SHPDAGKT, DTPGH, and NKLD.

This sequence belongs to the TRAFAC class translation factor GTPase superfamily. Classic translation factor GTPase family. PrfC subfamily.

It is found in the cytoplasm. Its function is as follows. Increases the formation of ribosomal termination complexes and stimulates activities of RF-1 and RF-2. It binds guanine nucleotides and has strong preference for UGA stop codons. It may interact directly with the ribosome. The stimulation of RF-1 and RF-2 is significantly reduced by GTP and GDP, but not by GMP. The chain is Peptide chain release factor 3 from Salmonella agona (strain SL483).